Reading from the N-terminus, the 508-residue chain is Potassium/proton antiporter CemA (508 aa).

5 helical membrane passes run 66–86 (LFII…LNLL), 282–302 (YQAL…WIIS), 386–406 (ILHL…FILG), 433–453 (ILLL…EVVI), and 468–488 (IISC…KYWI).

The protein belongs to the CemA family.

The protein localises to the plastid. It is found in the chloroplast inner membrane. The catalysed reaction is K(+)(in) + H(+)(out) = K(+)(out) + H(+)(in). Its function is as follows. Contributes to K(+)/H(+) antiport activity by supporting proton efflux to control proton extrusion and homeostasis in chloroplasts in a light-dependent manner to modulate photosynthesis. Prevents excessive induction of non-photochemical quenching (NPQ) under continuous-light conditions. Indirectly promotes efficient inorganic carbon uptake into chloroplasts. This is Potassium/proton antiporter CemA from Anthoceros angustus (Hornwort).